The primary structure comprises 381 residues: Succinyl-diaminopimelate desuccinylase (381 aa).

Residue His69 participates in Zn(2+) binding. The active site involves Asp71. Asp103 provides a ligand contact to Zn(2+). The active-site Proton acceptor is Glu137. Glu138, Glu166, and His355 together coordinate Zn(2+).

This sequence belongs to the peptidase M20A family. DapE subfamily. Homodimer. Requires Zn(2+) as cofactor. Co(2+) is required as a cofactor.

The catalysed reaction is N-succinyl-(2S,6S)-2,6-diaminopimelate + H2O = (2S,6S)-2,6-diaminopimelate + succinate. It participates in amino-acid biosynthesis; L-lysine biosynthesis via DAP pathway; LL-2,6-diaminopimelate from (S)-tetrahydrodipicolinate (succinylase route): step 3/3. Its function is as follows. Catalyzes the hydrolysis of N-succinyl-L,L-diaminopimelic acid (SDAP), forming succinate and LL-2,6-diaminopimelate (DAP), an intermediate involved in the bacterial biosynthesis of lysine and meso-diaminopimelic acid, an essential component of bacterial cell walls. The sequence is that of Succinyl-diaminopimelate desuccinylase from Rickettsia felis (strain ATCC VR-1525 / URRWXCal2) (Rickettsia azadi).